Reading from the N-terminus, the 147-residue chain is Plasminogen receptor (KT) (147 aa).

Over 1–52 the chain is Extracellular; sequence MGFIFSKSMNESMKNQKEFMLMNARLQLERQLIMQSEMRERQMAMQIAWSRE. A helical membrane pass occupies residues 53-73; it reads FLKYFGTFFGLAAISLTAGAI. The Cytoplasmic portion of the chain corresponds to 74–78; it reads KKKKP. The helical transmembrane segment at 79–99 threads the bilayer; sequence AFLVPIVPLSFILTYQYDLGY. Residues 100–147 lie on the Extracellular side of the membrane; it reads GTLLERMKGEAEDILETEKSKLQLPRGMITFESIEKARKEQSRFFIDK.

As to quaternary structure, interacts with PLAT and PLAUR. As to expression, expressed in peripheral blood cells and monocytes. Expressed in adrenal medulla.

It localises to the cell membrane. In terms of biological role, receptor for plasminogen. Regulates urokinase plasminogen activator-dependent and stimulates tissue-type plasminogen activator-dependent cell surface plasminogen activation. Proposed to be part of a local catecholaminergic cell plasminogen activation system that regulates neuroendocrine prohormone processing. Involved in regulation of inflammatory response; regulates monocyte chemotactic migration and matrix metalloproteinase activation, such as of MMP2 and MMP9. In Homo sapiens (Human), this protein is Plasminogen receptor (KT) (PLGRKT).